A 125-amino-acid chain; its full sequence is Scinderin (125 aa).

Tyrosine 13 bears the Phosphotyrosine mark. A 1,2-diacyl-sn-glycero-3-phospho-(1D-myo-inositol-4,5-bisphosphate) contacts are provided by residues 23-30 (KGGLKYKA) and 49-57 (RLLHVKGRR). The stretch at 59–99 (VRATEVPLSWDSFNKGDCFIIDLGSEIYQWFGSSCNKYERL) is one Gelsolin-like 1 repeat.

Belongs to the villin/gelsolin family.

Its subcellular location is the cytoplasm. It is found in the cytoskeleton. The protein resides in the cell projection. The protein localises to the podosome. Functionally, ca(2+)-dependent actin filament-severing protein that has a regulatory function in exocytosis by affecting the organization of the microfilament network underneath the plasma membrane. In vitro, also has barbed end capping and nucleating activities in the presence of Ca(2+). Severing activity is inhibited by phosphatidylinositol 4,5-bis-phosphate (PIP2). Required for megakaryocyte differentiation, maturation, polyploidization and apoptosis with the release of platelet-like particles. Plays a role in osteoclastogenesis (OCG) and actin cytoskeletal organization in osteoclasts. Regulates chondrocyte proliferation and differentiation. Inhibits cell proliferation and tumorigenesis. Signaling is mediated by MAPK, p38 and JNK pathways. This chain is Scinderin (SCIN), found in Sus scrofa (Pig).